The chain runs to 551 residues: Eukaryotic translation initiation factor 3 subunit D-2 (551 aa).

Positions 91-154 are disordered; the sequence is TKPYQRGRYR…RNTQNMGRRF (64 aa). Basic residues predominate over residues 95–113; the sequence is QRGRYRPNMRNNVRSRGRT. Over residues 121–136 the composition is skewed to low complexity; it reads ASLGGSTAGGATASTT. The segment at 290–304 is RNA gate; sequence QFDLLTVNETSVEPP. The interval 527–551 is disordered; that stretch reads PENAFDSDGDEEEESSDPLSNSNDN. Acidic residues predominate over residues 531–542; the sequence is FDSDGDEEEESS.

The protein belongs to the eIF-3 subunit D family. Component of the eukaryotic translation initiation factor 3 (eIF-3) complex. The eIF-3 complex interacts with pix.

Its subcellular location is the cytoplasm. MRNA cap-binding component of the eukaryotic translation initiation factor 3 (eIF-3) complex, which is involved in protein synthesis of a specialized repertoire of mRNAs and, together with other initiation factors, stimulates binding of mRNA and methionyl-tRNAi to the 40S ribosome. The eIF-3 complex specifically targets and initiates translation of a subset of mRNAs involved in cell proliferation. In the eIF-3 complex, eif3d specifically recognizes and binds the 7-methylguanosine cap of a subset of mRNAs. The sequence is that of Eukaryotic translation initiation factor 3 subunit D-2 from Drosophila melanogaster (Fruit fly).